A 629-amino-acid chain; its full sequence is ATP-dependent DNA helicase II subunit 2 (629 aa).

The Ku domain maps to 254-476 (SGLNRKTAVE…GHQIDELMEQ (223 aa)). Basic and acidic residues predominate over residues 608–620 (DLETLLKRGEQHS). Residues 608-629 (DLETLLKRGEQHSRGSPNNSNN) are disordered.

It belongs to the ku80 family. As to quaternary structure, heterodimer of YKU70/HDF1 and YKU80/HDF2. Interacts with SIR4.

It localises to the nucleus. Its subcellular location is the chromosome. The protein resides in the telomere. The catalysed reaction is ATP + H2O = ADP + phosphate + H(+). Functionally, single-stranded DNA-dependent ATP-dependent helicase. Involved in non-homologous end joining (NHEJ) DNA double strand break repair. DNA-binding is sequence-independent but has a high affinity to nicks in double-stranded DNA and to the ends of duplex DNA. Binds to naturally occurring chromosomal ends, and therefore provides chromosomal end protection. Appears to have a role in recruitment of telomerase and CDC13 to the telomere and the subsequent telomere elongation. Required also for telomere recombination to repair telomeric ends in the absence of telomerase. KU70, of the KU70/KU80 heterodimer, binds to the stem loop of TLC1, the RNA component of telomerase. Involved in telomere maintenance. Interacts with telomeric repeats and subtelomeric sequences thereby controlling telomere length and protecting against subtelomeric rearrangement. Maintains telomeric chromatin, which is involved in silencing the expression of genes located at the telomere. Required for mating-type switching. In Saccharomyces cerevisiae (strain ATCC 204508 / S288c) (Baker's yeast), this protein is ATP-dependent DNA helicase II subunit 2 (YKU80).